We begin with the raw amino-acid sequence, 971 residues long: Exportin-2 (971 aa).

Methionine 1 is modified (N-acetylmethionine). The Importin N-terminal domain occupies 29–102; that stretch reads AEKFLESVEG…KANIVHLMLS (74 aa). At serine 112 the chain carries Phosphoserine. 2 positions are modified to N6-acetyllysine: lysine 574 and lysine 824. Serine 931 is subject to Phosphoserine.

This sequence belongs to the XPO2/CSE1 family. In terms of assembly, found in a complex with CSE1L/XPO2, Ran and KPNA2. Binds with high affinity to importin-alpha only in the presence of RanGTP. The complex is dissociated by the combined action of RanBP1 and RanGAP1. Interacts with CFTR.

It is found in the cytoplasm. It localises to the nucleus. Its function is as follows. Export receptor for importin-alpha. Mediates importin-alpha re-export from the nucleus to the cytoplasm after import substrates (cargos) have been released into the nucleoplasm. In the nucleus binds cooperatively to importin-alpha and to the GTPase Ran in its active GTP-bound form. Docking of this trimeric complex to the nuclear pore complex (NPC) is mediated through binding to nucleoporins. Upon transit of a nuclear export complex into the cytoplasm, disassembling of the complex and hydrolysis of Ran-GTP to Ran-GDP (induced by RANBP1 and RANGAP1, respectively) cause release of the importin-alpha from the export receptor. CSE1L/XPO2 then return to the nuclear compartment and mediate another round of transport. The directionality of nuclear export is thought to be conferred by an asymmetric distribution of the GTP- and GDP-bound forms of Ran between the cytoplasm and nucleus. This Bos taurus (Bovine) protein is Exportin-2 (CSE1L).